Here is a 279-residue protein sequence, read N- to C-terminus: Proteasome subunit beta (279 aa).

The propeptide at 1–53 (MAAAFDPSGRLPDLFTSAGTSSFSAFLSMAAPELLPGRRPLPPGTAADLTPHA) is removed in mature form; by autocatalysis. Thr-54 acts as the Nucleophile in catalysis.

It belongs to the peptidase T1B family. The 20S proteasome core is composed of 14 alpha and 14 beta subunits that assemble into four stacked heptameric rings, resulting in a barrel-shaped structure. The two inner rings, each composed of seven catalytic beta subunits, are sandwiched by two outer rings, each composed of seven alpha subunits. The catalytic chamber with the active sites is on the inside of the barrel. Has a gated structure, the ends of the cylinder being occluded by the N-termini of the alpha-subunits. Is capped by the proteasome-associated ATPase, ARC.

The protein resides in the cytoplasm. The catalysed reaction is Cleavage of peptide bonds with very broad specificity.. It participates in protein degradation; proteasomal Pup-dependent pathway. With respect to regulation, the formation of the proteasomal ATPase ARC-20S proteasome complex, likely via the docking of the C-termini of ARC into the intersubunit pockets in the alpha-rings, may trigger opening of the gate for substrate entry. Interconversion between the open-gate and close-gate conformations leads to a dynamic regulation of the 20S proteasome proteolysis activity. Functionally, component of the proteasome core, a large protease complex with broad specificity involved in protein degradation. This Salinispora arenicola (strain CNS-205) protein is Proteasome subunit beta.